Consider the following 1896-residue polypeptide: Trinucleotide repeat-containing gene 6A protein (1896 aa).

2 stretches are compositionally biased toward basic and acidic residues: residues 1 to 21 (MRELEAKATKDVERNLSRDLV) and 39 to 57 (KKKEAAQKKATEQKIKVPE). Disordered regions lie at residues 1 to 137 (MREL…LLKR), 159 to 209 (SESS…DCST), 222 to 250 (EAWPSAPGSDPELAPECIDADSASNSESE), and 257 to 276 (ASGNTGGEKDGLRNSTGLGS). An interaction with argonaute family proteins region spans residues 1 to 917 (MRELEAKATK…GDPPKCNQSL (917 aa)). Low complexity-rich tracts occupy residues 69–93 (ANSDNGTSTATSTNNNAKRATASNQ) and 101–113 (QQPQQEQQQQQPQ). Basic residues predominate over residues 125–137 (RFRHQEHKQLLKR). Positions 239-488 (IDADSASNSE…QAPSVMNGTS (250 aa)) are sufficient for interaction with AGO1, AGO3 and AGO4. Sufficient for interaction with AGO2 regions lie at residues 255 to 331 (VMAS…NAWG), 303 to 384 (GALI…STIG), 325 to 424 (NRMN…KVSF), 394 to 480 (SKVS…QIQA), and 487 to 736 (TSLS…NGTE). 2 stretches are compositionally biased toward polar residues: residues 396 to 410 (VSGSSTHGTWGSLQE) and 417 to 429 (SGTQKVSFSGQPQ). Disordered stretches follow at residues 396–461 (VSGS…NELP), 548–683 (FQVN…RRKI), 703–998 (LSNS…DPSK), 1011–1126 (IPEA…PTGW), and 1143–1182 (QELNSSLNWPPYTKKMSSKGLSGKKRRRERGMMKGGNKQE). Over residues 430-443 (NITTETTGPNNTTN) the composition is skewed to low complexity. Polar residues predominate over residues 444–461 (FMTSSLPNSGSVQNNELP). The tract at residues 551-1279 (NTNKGGGVWE…MFGVGNTAAQ (729 aa)) is sufficient for interaction with AGO1 and AGO4. Residues 573–584 (SGNGANSGGSRR) show a composition bias toward gly residues. Composition is skewed to polar residues over residues 591–617 (QNTGTGLSSVEWNKLPSNQHSNDSANG) and 635–647 (GSATSQTNEQNSV). A compositionally biased stretch (basic and acidic residues) spans 665-683 (GRLEEKVTGESQSRDRRKI). Over residues 703 to 722 (LSNSGWGQTPIKQNTAWDTE) the composition is skewed to polar residues. Residues 723–733 (TSPRGERKTDN) show a composition bias toward basic and acidic residues. S724 carries the post-translational modification Phosphoserine. Residues 738-766 (WGSSATQTFNSGACTDKTSPNSNDTSSVS) show a composition bias toward polar residues. The segment covering 858 to 871 (SSSGGSDSDRSISG) has biased composition (low complexity). Residue S863 is modified to Phosphoserine. 2 stretches are compositionally biased toward polar residues: residues 876–906 (GKTSSFTWGNNINPNNSSGWDESSKPNSSQG) and 924–937 (KPVSSPDWNKQQDI). S976 bears the Phosphoserine mark. Polar residues-rich tracts occupy residues 1033-1042 (AVSSKETSSG), 1054-1064 (TPATTVDNGTS), and 1082-1105 (AASNASTWGSSSVGPQSLSKSGPK). Residues 1059–1129 (VDNGTSAWGK…GSRPTGWEEE (71 aa)) form a sufficient for interaction with AGO2 region. Over residues 1143–1163 (QELNSSLNWPPYTKKMSSKGL) the composition is skewed to low complexity. Phosphoserine occurs at positions 1197 and 1255. 3 disordered regions span residues 1234-1256 (GDYNRTVGKGPGSRPQISKESSM), 1273-1306 (VGNTAAQPRGMQQPPAQPLSSSQPNLRAQVPPPL), and 1360-1395 (QRAQSQRSAPSANRQQQDQQGRPLSVQQQMMQQSRQ). 2 stretches are compositionally biased toward low complexity: residues 1284–1296 (QQPPAQPLSSSQP) and 1360–1376 (QRAQSQRSAPSANRQQQ). T1406 bears the Phosphothreonine mark. Disordered regions lie at residues 1512–1570 (MNSS…VTPG) and 1659–1685 (PKNITAPSRPPPGLTGQKPPLSTWDNS). S1520 carries the post-translational modification Phosphoserine. A sufficient for interaction with AGO2 region spans residues 1605–1896 (TSAWSSIRAS…DHLGGGGESM (292 aa)). The 73-residue stretch at 1716–1788 (NWLVLKNLTP…TTILAEFASE (73 aa)) folds into the RRM domain. Phosphoserine occurs at positions 1804 and 1825.

This sequence belongs to the GW182 family. Interacts with AGO2. Interacts with AGO1, AGO3 and AGO4. Interacts with CNOT1; the interaction is direct and mediates the association with the CCR4-NOT complex. Interacts with ZC3H12A. Interacts with SND1. Interacts with GARRE1.

It is found in the cytoplasm. Its subcellular location is the P-body. In terms of biological role, plays a role in RNA-mediated gene silencing by both micro-RNAs (miRNAs) and short interfering RNAs (siRNAs). Required for miRNA-dependent repression of translation and for siRNA-dependent endonucleolytic cleavage of complementary mRNAs by argonaute family proteins. As a scaffolding protein, associates with argonaute proteins bound to partially complementary mRNAs, and can simultaneously recruit CCR4-NOT and PAN deadenylase complexes. This Mus musculus (Mouse) protein is Trinucleotide repeat-containing gene 6A protein (Tnrc6a).